We begin with the raw amino-acid sequence, 113 residues long: Histone H2B (113 aa).

The interval 1-21 is disordered; sequence MPATPAKRAKRVQQEKRHHKK. The segment covering 7–21 has biased composition (basic residues); that stretch reads KRAKRVQQEKRHHKK. K109 participates in a covalent cross-link: Glycyl lysine isopeptide (Lys-Gly) (interchain with G-Cter in ubiquitin).

This sequence belongs to the histone H2B family. In terms of assembly, the nucleosome is a histone octamer containing two molecules each of H2A, H2B, H3 and H4 assembled in one H3-H4 heterotetramer and two H2A-H2B heterodimers. The octamer wraps approximately 147 bp of DNA. Monoubiquitination of Lys-109 gives a specific tag for epigenetic transcriptional activation and is also prerequisite for histone H3 'Lys-4' and 'Lys-79' methylation.

It is found in the nucleus. The protein localises to the chromosome. Its function is as follows. Core component of nucleosome. Nucleosomes wrap and compact DNA into chromatin, limiting DNA accessibility to the cellular machineries which require DNA as a template. Histones thereby play a central role in transcription regulation, DNA repair, DNA replication and chromosomal stability. DNA accessibility is regulated via a complex set of post-translational modifications of histones, also called histone code, and nucleosome remodeling. The sequence is that of Histone H2B (H2B1) from Euplotes crassus.